The sequence spans 344 residues: Dihydroorotate dehydrogenase (quinone) (344 aa).

Residues 65-69 (AGLDK) and T89 each bind FMN. Residue K69 coordinates substrate. 114–118 (NRLGF) lines the substrate pocket. Positions 145 and 178 each coordinate FMN. N178 is a binding site for substrate. Residue S181 is the Nucleophile of the active site. N183 provides a ligand contact to substrate. FMN contacts are provided by K223 and T251. 252-253 (NT) is a binding site for substrate. FMN-binding positions include G274, G303, and 324 to 325 (YT).

Belongs to the dihydroorotate dehydrogenase family. Type 2 subfamily. Monomer. FMN is required as a cofactor.

The protein resides in the cell membrane. It carries out the reaction (S)-dihydroorotate + a quinone = orotate + a quinol. Its pathway is pyrimidine metabolism; UMP biosynthesis via de novo pathway; orotate from (S)-dihydroorotate (quinone route): step 1/1. Catalyzes the conversion of dihydroorotate to orotate with quinone as electron acceptor. This is Dihydroorotate dehydrogenase (quinone) from Methylibium petroleiphilum (strain ATCC BAA-1232 / LMG 22953 / PM1).